Reading from the N-terminus, the 317-residue chain is Tumor-associated calcium signal transducer 2 (317 aa).

The signal sequence occupies residues 1-24; the sequence is MARGLDLAPLLLLLLAMATRFCTA. At 25–270 the chain is on the extracellular side; sequence QSNCTCPTNK…QFSMKRLTAG (246 aa). Residue asparagine 27 is glycosylated (N-linked (GlcNAc...) asparagine). Residues 64-139 form the Thyroglobulin type-1 domain; it reads TSKCLLLKAR…TDKGDQSLRC (76 aa). 3 cysteine pairs are disulfide-bonded: cysteine 67/cysteine 102, cysteine 113/cysteine 119, and cysteine 121/cysteine 139. The N-linked (GlcNAc...) asparagine glycan is linked to asparagine 114. 2 N-linked (GlcNAc...) asparagine glycosylation sites follow: asparagine 162 and asparagine 202. The helical transmembrane segment at 271–291 threads the bilayer; sequence VIAVIAVVSVAVVAGVVVLVV. At 292–317 the chain is on the cytoplasmic side; that stretch reads TKRRKSGKYKKVELKELGEMRSEPSL.

It belongs to the EPCAM family. In terms of tissue distribution, expressed in kidney, lung, ovary and testis. High levels of expression in immortalized keratinocytes.

Its subcellular location is the membrane. May function as a growth factor receptor. This is Tumor-associated calcium signal transducer 2 (Tacstd2) from Mus musculus (Mouse).